The primary structure comprises 262 residues: MSNLRRAAEALRRSKTVVFFTGAGISADSGIPTFRDKLTGLWAKHDPQRLETADAFRANPTLVWSWYLWRRHQVSQAKPNSAHLSIPQLADAGWDVSVVTQNIDDLHERAGSSPVVHLHGSLMDVKCFGCHRPAELSPDQLAVPLEGQLIEPPRCTRCNGRLRPGVVWFRENLPDNAWRSAVRLVRACDLLVSVGTSGVVMPAAGIPDMALAVGATVIHVNLEDVGMDGADEIMLEGPAGVVLPALLQATGVAALSPPGVPT.

One can recognise a Deacetylase sirtuin-type domain in the interval 1 to 262; the sequence is MSNLRRAAEA…AALSPPGVPT (262 aa). Residue 22 to 42 participates in NAD(+) binding; that stretch reads GAGISADSGIPTFRDKLTGLW. Residues tyrosine 67 and arginine 70 each contribute to the substrate site. Residue 101–104 coordinates NAD(+); sequence QNID. Histidine 119 acts as the Proton acceptor in catalysis. Positions 127, 130, 155, and 158 each coordinate Zn(2+). Residues 195–197, 221–223, and alanine 239 each bind NAD(+); these read GTS and NLE.

It belongs to the sirtuin family. Class III subfamily. It depends on Zn(2+) as a cofactor.

It is found in the cytoplasm. The enzyme catalyses N(6)-acetyl-L-lysyl-[protein] + NAD(+) + H2O = 2''-O-acetyl-ADP-D-ribose + nicotinamide + L-lysyl-[protein]. The catalysed reaction is N(6)-succinyl-L-lysyl-[protein] + NAD(+) + H2O = 2''-O-succinyl-ADP-D-ribose + nicotinamide + L-lysyl-[protein]. In terms of biological role, NAD-dependent lysine deacetylase and desuccinylase that specifically removes acetyl and succinyl groups on target proteins. Modulates the activities of several proteins which are inactive in their acylated form. The protein is NAD-dependent protein deacylase of Pseudomonas putida (strain ATCC 47054 / DSM 6125 / CFBP 8728 / NCIMB 11950 / KT2440).